Consider the following 533-residue polypeptide: Decreased expression in renal and prostate cancer protein (533 aa).

A compositionally biased stretch (basic and acidic residues) spans 1–12; it reads MKEPRIFPRERP. 4 disordered regions span residues 1–31, 67–164, 177–259, and 299–350; these read MKEPRIFPRERPTPWTRAPLPPRGRLDGGPV, QNPS…PDPR, MRAG…RAGG, and ASGN…PNSA. A Phosphoserine modification is found at Ser160. The span at 299 to 309 shows a compositional bias: polar residues; that stretch reads ASGNMGTNPPT. An Asymmetric dimethylarginine modification is found at Arg368. Position 396 is an omega-N-methylarginine (Arg396). Ser432 is subject to Phosphoserine.

It belongs to the DERPC family.

It localises to the nucleus. Its function is as follows. Potential tumor suppressor. The chain is Decreased expression in renal and prostate cancer protein from Mus musculus (Mouse).